The primary structure comprises 255 residues: uncharacterized protein (255 aa).

The first 28 residues, 1–28, serve as a signal peptide directing secretion; that stretch reads MFKLNFKNNYKVLTLLFSLTLSMFVSNA. Asn-38, Asn-61, and Asn-83 each carry an N-linked (GlcNAc...) asparagine glycan.

Its subcellular location is the secreted. This is an uncharacterized protein from Dictyostelium discoideum (Social amoeba).